The following is a 231-amino-acid chain: Large ribosomal subunit protein uL1 (231 aa).

Belongs to the universal ribosomal protein uL1 family. As to quaternary structure, part of the 50S ribosomal subunit.

Its function is as follows. Binds directly to 23S rRNA. The L1 stalk is quite mobile in the ribosome, and is involved in E site tRNA release. Protein L1 is also a translational repressor protein, it controls the translation of the L11 operon by binding to its mRNA. The sequence is that of Large ribosomal subunit protein uL1 from Staphylococcus carnosus (strain TM300).